Here is a 778-residue protein sequence, read N- to C-terminus: MARTDDQAKSVDTRYNARVESLRDKEYPMLNGSIYLDHAGTTPYPKSLMDRFAKEMTSNLFGNPHSASASSQLSTARIEDIRLRVLRFFNADPAEFDLVFVANATAGIKLVADALRTAPDGFDYSYHQASHTSLIGVREEARNSLCLDDQEVDDWLGGGCPFENDSEDRPVLFAYPAQSNMDGRRYPLNWAEKVCRGGTRKTYTLLDAAALVCSSPLDLSQANAAPDFTVLSFYKIFGFPDLGALIVRRDAEEAFDTRRYFGGGTVDMVVCLKEQWHAPKAQFLHERLEDGTLPVHSIIALDAALDVHKQLFGSMRDVASHTAFLSAMLYTRLELLRHGNGQSVCVLYSPGPETANNGLSSGPVVSFNIRNSQGAWISLAEVEKLATLKGFHIRTGGVCNPGGIASALGLEPWEMRRNFSSGFRCGTDLDIMAGKPTGVIRASLGAMSTISDVDSFVEFIAEFYRDASLSPARTEPVPQPHDPSRLRIHSMSIYPIKSCCGFQVPSGTDWEVRPEGLAWDREWCLVHQGTGQALSQKRHSKMALIRPALDFERGQLRVSYAGELPAHQPREISIPLSKNPSLFRSSSSRSRSSRVCGEEIQAQTYSSTAINSFFSDVLGVPCLLARFPAGGHGKSMRHSKAHLQKHQLSLLPTARPALPGSFPPSPPDSDTEKTVSRRILLSNESPILAITLPSVTELNREIHLSKPGLKEVSPAVFRANIVMTPADPDVPLAPYAEDSWSGIKVGPQQHEFEMLGACRRCHMVCINQETAERARSRL.

Lysine 235 carries the post-translational modification N6-(pyridoxal phosphate)lysine. Cysteine 399 is an active-site residue. Disordered regions lie at residues 576 to 596 (LSKN…SRVC) and 654 to 673 (ARPA…DTEK). A compositionally biased stretch (low complexity) spans 584–594 (RSSSSRSRSSR). One can recognise an MOSC domain in the interval 651–778 (LPTARPALPG…ETAERARSRL (128 aa)).

The protein belongs to the class-V pyridoxal-phosphate-dependent aminotransferase family. MOCOS subfamily. Requires pyridoxal 5'-phosphate as cofactor.

The enzyme catalyses Mo-molybdopterin + L-cysteine + AH2 = thio-Mo-molybdopterin + L-alanine + A + H2O. It functions in the pathway cofactor biosynthesis; molybdopterin biosynthesis. Sulfurates the molybdenum cofactor. Sulfation of molybdenum is essential for xanthine dehydrogenase (XDH) and aldehyde oxidase (ADO) enzymes in which molybdenum cofactor is liganded by 1 oxygen and 1 sulfur atom in active form. The sequence is that of Molybdenum cofactor sulfurase from Chaetomium globosum (strain ATCC 6205 / CBS 148.51 / DSM 1962 / NBRC 6347 / NRRL 1970) (Soil fungus).